A 442-amino-acid chain; its full sequence is Methionine aminopeptidase 2 (442 aa).

Residues 1-81 (MAAQAPTEAL…APTAQSDPPR (81 aa)) are disordered. A compositionally biased stretch (basic residues) spans 56-72 (PLRRRRRRRRTRKKKKA). His196 is a substrate binding site. Residues Asp216, Asp227, and His296 each contribute to the a divalent metal cation site. His304 lines the substrate pocket. Residues Glu329 and Glu423 each coordinate a divalent metal cation.

The protein belongs to the peptidase M24A family. Methionine aminopeptidase eukaryotic type 2 subfamily. It depends on Co(2+) as a cofactor. Zn(2+) is required as a cofactor. The cofactor is Mn(2+). Requires Fe(2+) as cofactor.

It localises to the cytoplasm. It carries out the reaction Release of N-terminal amino acids, preferentially methionine, from peptides and arylamides.. In terms of biological role, cotranslationally removes the N-terminal methionine from nascent proteins. The N-terminal methionine is often cleaved when the second residue in the primary sequence is small and uncharged (Met-Ala-, Cys, Gly, Pro, Ser, Thr, or Val). The chain is Methionine aminopeptidase 2 from Verticillium alfalfae (strain VaMs.102 / ATCC MYA-4576 / FGSC 10136) (Verticillium wilt of alfalfa).